Consider the following 129-residue polypeptide: MATTYATGKRKTAIAKVWVKPGSGKISVNGVDLNTWLGGHEAIKLKVVQPLLVTKQETSMDIKATTLGGGYSAQAEALRHGISRALAAMDADFRALLKPKGLLTRDSRTVERKKYGRRKARRSPQFSKR.

Residues 107–129 (SRTVERKKYGRRKARRSPQFSKR) are disordered. A compositionally biased stretch (basic residues) spans 114-129 (KYGRRKARRSPQFSKR).

It belongs to the universal ribosomal protein uS9 family.

The sequence is that of Small ribosomal subunit protein uS9 from Campylobacter jejuni subsp. jejuni serotype O:23/36 (strain 81-176).